A 56-amino-acid polypeptide reads, in one-letter code: Large ribosomal subunit protein bL32 (56 aa).

The interval methionine 1 to histidine 37 is disordered. Over residues lysine 7 to arginine 16 the composition is skewed to basic residues.

This sequence belongs to the bacterial ribosomal protein bL32 family.

In Haemophilus influenzae (strain PittEE), this protein is Large ribosomal subunit protein bL32.